Consider the following 135-residue polypeptide: MAHTVLQPFKRINLPVLNAYNNLFCNTFLVQTRSYAKKPVFKGKGKGMVKEVLKGPEVCKDPAKLCTYAVGVNVFKQGEDPTIKPKDEYPEWLFQLNLGPVKQLNELEPDSWEYWRRIRKEHIWRHNKLNKGKKM.

It belongs to the mitochondrion-specific ribosomal protein mL54 family. In terms of assembly, component of the mitochondrial ribosome large subunit (39S) which comprises a 16S rRNA and about 50 distinct proteins.

It is found in the mitochondrion. This chain is Large ribosomal subunit protein mL54 (mrpl54), found in Danio rerio (Zebrafish).